The primary structure comprises 325 residues: Malate dehydrogenase (325 aa).

7–13 lines the NADP(+) pocket; the sequence is GSTGRVG. R84 and R90 together coordinate substrate. Residues N97 and 120 to 122 each bind NADP(+); that span reads VTN. Substrate is bound by residues N122 and R153. H177 acts as the Proton acceptor in catalysis.

The protein belongs to the LDH/MDH superfamily.

The catalysed reaction is (S)-malate + NADP(+) = oxaloacetate + NADPH + H(+). The enzyme catalyses (S)-malate + NAD(+) = oxaloacetate + NADH + H(+). Its function is as follows. Catalyzes the reversible oxidation of malate to oxaloacetate. Can use NAD(+) and NADP(+) with similar specific activity. In Methanothermobacter marburgensis (strain ATCC BAA-927 / DSM 2133 / JCM 14651 / NBRC 100331 / OCM 82 / Marburg) (Methanobacterium thermoautotrophicum), this protein is Malate dehydrogenase.